The following is a 297-amino-acid chain: tRNA pseudouridine synthase A (297 aa).

The Nucleophile role is filled by D72. Y144 is a substrate binding site.

This sequence belongs to the tRNA pseudouridine synthase TruA family. Homodimer.

The enzyme catalyses uridine(38/39/40) in tRNA = pseudouridine(38/39/40) in tRNA. Functionally, formation of pseudouridine at positions 38, 39 and 40 in the anticodon stem and loop of transfer RNAs. The sequence is that of tRNA pseudouridine synthase A from Mycobacterium bovis (strain ATCC BAA-935 / AF2122/97).